The following is a 228-amino-acid chain: Large ribosomal subunit protein uL3 (228 aa).

The tract at residues 157-176 is disordered; the sequence is CHRHAGGTGMSASPSRTFKG.

It belongs to the universal ribosomal protein uL3 family. In terms of assembly, part of the 50S ribosomal subunit. Forms a cluster with proteins L14 and L19.

One of the primary rRNA binding proteins, it binds directly near the 3'-end of the 23S rRNA, where it nucleates assembly of the 50S subunit. The chain is Large ribosomal subunit protein uL3 from Rhodopirellula baltica (strain DSM 10527 / NCIMB 13988 / SH1).